Reading from the N-terminus, the 383-residue chain is tRNA-specific 2-thiouridylase MnmA (383 aa).

ATP contacts are provided by residues 16–23 (AMSGGVDS) and leucine 42. The active-site Nucleophile is cysteine 110. The cysteines at positions 110 and 209 are disulfide-linked. Glycine 134 serves as a coordination point for ATP. An interaction with tRNA region spans residues 159 to 161 (KDQ). Cysteine 209 functions as the Cysteine persulfide intermediate in the catalytic mechanism.

It belongs to the MnmA/TRMU family.

The protein resides in the cytoplasm. It carries out the reaction S-sulfanyl-L-cysteinyl-[protein] + uridine(34) in tRNA + AH2 + ATP = 2-thiouridine(34) in tRNA + L-cysteinyl-[protein] + A + AMP + diphosphate + H(+). Functionally, catalyzes the 2-thiolation of uridine at the wobble position (U34) of tRNA, leading to the formation of s(2)U34. The sequence is that of tRNA-specific 2-thiouridylase MnmA from Caulobacter vibrioides (strain ATCC 19089 / CIP 103742 / CB 15) (Caulobacter crescentus).